Here is a 541-residue protein sequence, read N- to C-terminus: Chaperonin GroEL (541 aa).

ATP contacts are provided by residues 29–32 (TLGP), 86–90 (DGTTT), G413, 476–478 (NAA), and D492. The tract at residues 521 to 541 (KPEDNPAPAAPAANPGMGGMM) is disordered. The segment covering 526 to 535 (PAPAAPAANP) has biased composition (low complexity).

This sequence belongs to the chaperonin (HSP60) family. Forms a cylinder of 14 subunits composed of two heptameric rings stacked back-to-back. Interacts with the co-chaperonin GroES.

The protein localises to the cytoplasm. It catalyses the reaction ATP + H2O + a folded polypeptide = ADP + phosphate + an unfolded polypeptide.. Together with its co-chaperonin GroES, plays an essential role in assisting protein folding. The GroEL-GroES system forms a nano-cage that allows encapsulation of the non-native substrate proteins and provides a physical environment optimized to promote and accelerate protein folding. This is Chaperonin GroEL from Levilactobacillus brevis (strain ATCC 367 / BCRC 12310 / CIP 105137 / JCM 1170 / LMG 11437 / NCIMB 947 / NCTC 947) (Lactobacillus brevis).